Here is an 84-residue protein sequence, read N- to C-terminus: Defensin-like protein 172 (84 aa).

Residues 1 to 23 form the signal peptide; that stretch reads MAKASSTLVLSIIFLVMFALVEQ. 4 cysteine pairs are disulfide-bonded: Cys27-Cys74, Cys34-Cys56, Cys40-Cys68, and Cys44-Cys70.

This sequence belongs to the DEFL family.

It localises to the secreted. This Arabidopsis thaliana (Mouse-ear cress) protein is Defensin-like protein 172 (LCR60).